The following is a 246-amino-acid chain: DNA repair protein RecO (246 aa).

It belongs to the RecO family.

Involved in DNA repair and RecF pathway recombination. This Marinobacter nauticus (strain ATCC 700491 / DSM 11845 / VT8) (Marinobacter aquaeolei) protein is DNA repair protein RecO.